Here is a 902-residue protein sequence, read N- to C-terminus: Auxin response factor 5 (902 aa).

A DNA-binding region (TF-B3) is located at residues 158-260; that stretch reads FCKTLTASDT…QLMVGVRRAN (103 aa). Residues 497 to 543 form a disordered region; that stretch reads SEMVQPQNKLTVNPSASNTSGQEQNLSQSMSAPAKPENSTLSGCSSG. Residues 793-877 enclose the PB1 domain; it reads RTYTKVQKTG…RCIRILSPTE (85 aa).

This sequence belongs to the ARF family. In terms of assembly, homodimers and heterodimers. Interacts with BRX and the auxin-responsive proteins IAA1, IAA12 (BODENLOS), IAA17 and ARF7. In terms of tissue distribution, expressed in the whole plant with a lower expression in leaves. Detected in embryo axis, provascular tissues, procambium and some differentiated vascular regions of mature organs.

It localises to the nucleus. Functionally, auxin response factors (ARFs) are transcriptional factors that bind specifically to the DNA sequence 5'-TGTCTC-3' found in the auxin-responsive promoter elements (AuxREs). Seems to act as transcriptional activator. Formation of heterodimers with Aux/IAA proteins may alter their ability to modulate early auxin response genes expression. Mediates embryo axis formation and vascular tissues differentiation. Functionally redundant with ARF7. May be necessary to counteract AMP1 activity. The protein is Auxin response factor 5 (ARF5) of Arabidopsis thaliana (Mouse-ear cress).